The chain runs to 381 residues: 6-oxocyclohex-1-ene-1-carbonyl-CoA hydrolase (381 aa).

This sequence belongs to the enoyl-CoA hydratase/isomerase family. In terms of assembly, homohexamer.

It catalyses the reaction 6-oxocyclohex-1-ene-1-carbonyl-CoA + 2 H2O = 3-hydroxy-6-carboxyhexanoyl-CoA + H(+). Its pathway is aromatic compound metabolism; benzoyl-CoA degradation. Its function is as follows. Involved in the central benzoyl-CoA catabolism. Catalyzes the addition of one molecule of water to the double bond and the hydrolytic cleavage of C-C bond in the alicyclic ring, 6-oxocyclohex-1-ene-1-carbonyl-CoA (6-OCH-CoA) to yield 3-hydroxypimelyl-CoA. This chain is 6-oxocyclohex-1-ene-1-carbonyl-CoA hydrolase, found in Geobacter metallireducens (strain ATCC 53774 / DSM 7210 / GS-15).